A 423-amino-acid chain; its full sequence is UDP-N-acetylglucosamine 1-carboxyvinyltransferase 2 (423 aa).

Lys23–Asn24 contributes to the phosphoenolpyruvate binding site. Arg95 serves as a coordination point for UDP-N-acetyl-alpha-D-glucosamine. Cys119 (proton donor) is an active-site residue. Residue Cys119 is modified to 2-(S-cysteinyl)pyruvic acid O-phosphothioketal. Positions 306 and 328 each coordinate UDP-N-acetyl-alpha-D-glucosamine.

Belongs to the EPSP synthase family. MurA subfamily.

The protein resides in the cytoplasm. The enzyme catalyses phosphoenolpyruvate + UDP-N-acetyl-alpha-D-glucosamine = UDP-N-acetyl-3-O-(1-carboxyvinyl)-alpha-D-glucosamine + phosphate. Its pathway is cell wall biogenesis; peptidoglycan biosynthesis. Its function is as follows. Cell wall formation. Adds enolpyruvyl to UDP-N-acetylglucosamine. The sequence is that of UDP-N-acetylglucosamine 1-carboxyvinyltransferase 2 from Symbiobacterium thermophilum (strain DSM 24528 / JCM 14929 / IAM 14863 / T).